The primary structure comprises 129 residues: uncharacterized protein (129 aa).

A compositionally biased stretch (low complexity) spans 1–13 (MSDVAETVVAQEP). The segment at 1-129 (MSDVAETVVA…SGDAPAVAAE (129 aa)) is disordered. Basic and acidic residues predominate over residues 34–94 (IDEKTSEQNG…KRVSSAHEEA (61 aa)). Residues 117 to 129 (VAASGDAPAVAAE) are compositionally biased toward low complexity.

This is an uncharacterized protein from Caenorhabditis elegans.